We begin with the raw amino-acid sequence, 417 residues long: Sterile alpha motif domain-containing protein 14 (417 aa).

The segment at L37 to H306 is disordered. Residues K40–S49 are compositionally biased toward basic residues. A phosphoserine mark is found at S84 and S108. The span at S138–S153 shows a compositional bias: low complexity. The segment covering P159–S173 has biased composition (basic and acidic residues). Residues S173 and S179 each carry the phosphoserine modification. Composition is skewed to low complexity over residues S244–S260 and S276–P289. Position 279 is a phosphoserine (S279). Phosphothreonine is present on T283. Residues W326 to A389 form the SAM domain. The stretch at D375–K416 forms a coiled coil. A disordered region spans residues A390 to S417.

The sequence is that of Sterile alpha motif domain-containing protein 14 (Samd14) from Rattus norvegicus (Rat).